We begin with the raw amino-acid sequence, 346 residues long: Cell division protein FtsZ 2 (346 aa).

GTP-binding positions include 23 to 27, 110 to 112, E141, R145, and D189; these read GGGGN and GTG. The interval 320-346 is disordered; it reads SNRSAQPTAPEAMNGQTAAAVPSRTLQ.

It belongs to the FtsZ family. Homodimer. Polymerizes to form a dynamic ring structure in a strictly GTP-dependent manner. Interacts directly with several other division proteins.

The protein resides in the cytoplasm. Functionally, essential cell division protein that forms a contractile ring structure (Z ring) at the future cell division site. The regulation of the ring assembly controls the timing and the location of cell division. One of the functions of the FtsZ ring is to recruit other cell division proteins to the septum to produce a new cell wall between the dividing cells. Binds GTP and shows GTPase activity. This is Cell division protein FtsZ 2 from Rhizobium meliloti (strain 1021) (Ensifer meliloti).